A 239-amino-acid chain; its full sequence is Thymidylate kinase (239 aa).

10 to 17 (GVNRVGKS) contacts ATP.

Belongs to the thymidylate kinase family.

It carries out the reaction dTMP + ATP = dTDP + ADP. It participates in pyrimidine metabolism; dTTP biosynthesis. Catalyzes the conversion of dTMP to dTDP. This is Thymidylate kinase (TMK) from African swine fever virus (isolate Tick/South Africa/Pretoriuskop Pr4/1996) (ASFV).